We begin with the raw amino-acid sequence, 839 residues long: V-type proton ATPase 116 kDa subunit a 1 (839 aa).

Residues 1–395 lie on the Cytoplasmic side of the membrane; that stretch reads MGELFRSEEM…DAYGIGTYRE (395 aa). 2 positions are modified to phosphothreonine: Thr-257 and Thr-367. Residue Tyr-371 is modified to Phosphotyrosine. Residues 396–414 traverse the membrane as a helical segment; sequence INPAPYTVITFPFLFAVMF. At 415 to 416 the chain is on the vacuolar side; the sequence is GD. A helical transmembrane segment spans residues 417–433; the sequence is FGHGILMTLFAVWMVLR. Over 434 to 448 the chain is Cytoplasmic; that stretch reads ESRILSQKHENEMFS. The chain crosses the membrane as a helical span at residues 449-478; the sequence is MVFSGRYIILLMGLFSIYTGLIYNDCFSKS. Residues 479–542 lie on the Vacuolar side of the membrane; that stretch reads LNIFGSSWSV…ATNKLTFLNS (64 aa). Residues 543-562 form a helical membrane-spanning segment; that stretch reads FKMKMSVILGIIHMLFGVSL. Topologically, residues 563–580 are cytoplasmic; the sequence is SLFNHIYFKKPLNIYFGF. Residues 581 to 601 traverse the membrane as a helical segment; it reads IPEIIFMSSLFGYLVILIFYK. Residues 602–646 are Vacuolar-facing; sequence WTAYDAHSSRNAPSLLIHFINMFLFSYPESGNAMLYSGQKGIQCF. The helical transmembrane segment at 647-666 threads the bilayer; it reads LIVVAMLCVPWMLLFKPLIL. At 667–726 the chain is on the cytoplasmic side; it reads RHQYLRKKHLGTLNFGGIRVGNGPTEEDAEIIQHDQLSTHSEDAEEFDFGDTMVHQAIHT. A helical transmembrane segment spans residues 727-751; it reads IEYCLGCISNTASYLRLWALSLAHA. Residues 752–772 lie on the Vacuolar side of the membrane; sequence QLSEVLWTMVIHIGLHVRSLA. The chain crosses the membrane as a helical span at residues 773-811; that stretch reads GGLGLFFIFAAFATLTVAILLIMEGLSAFLHALRLHWVE. At 812–839 the chain is on the cytoplasmic side; the sequence is FQNKFYTGTGFKFLPFSFEHIREGKFDE.

Belongs to the V-ATPase 116 kDa subunit family. As to quaternary structure, V-ATPase is a heteromultimeric enzyme made up of two complexes: the ATP-hydrolytic V1 complex and the proton translocation V0 complex. The V1 complex consists of three catalytic AB heterodimers that form a heterohexamer, three peripheral stalks each consisting of EG heterodimers, one central rotor including subunits D and F, and the regulatory subunits C and H. The proton translocation complex V0 consists of the proton transport subunit a, a ring of proteolipid subunits c9c'', rotary subunit d, subunits e and f, and the accessory subunits ATP6AP1/Ac45 and ATP6AP2/PRR. Interacts with SPAAR. In terms of tissue distribution, predominantly expressed in neurons in the cortex and in the dentate gyrus, CA1 and CA3 regions of the hippocampus (at protein level). Expressed at lower levels in astrocytes, oligodendrocytes and microglia (at protein level). In the cerebellum, present in Purkinje and granule cells (at protein level).

It is found in the cytoplasmic vesicle. The protein localises to the clathrin-coated vesicle membrane. The protein resides in the secretory vesicle. It localises to the synaptic vesicle membrane. Its subcellular location is the melanosome. In terms of biological role, subunit of the V0 complex of vacuolar(H+)-ATPase (V-ATPase), a multisubunit enzyme composed of a peripheral complex (V1) that hydrolyzes ATP and a membrane integral complex (V0) that translocates protons. V-ATPase is responsible for the acidification of various organelles, such as lysosomes, endosomes, the trans-Golgi network, and secretory granules, including synaptic vesicles. In certain cell types, can be exported to the plasma membrane, where it is involved in the acidification of the extracellular environment. Required for assembly and activity of the vacuolar ATPase. Through its action on compartment acidification, plays an essential role in neuronal development in terms of integrity and connectivity of neurons. This Mus musculus (Mouse) protein is V-type proton ATPase 116 kDa subunit a 1 (Atp6v0a1).